Consider the following 506-residue polypeptide: Ribose import ATP-binding protein RbsA 1 (506 aa).

ABC transporter domains lie at 5 to 241 (LALT…VGRR) and 254 to 498 (RDAA…TSDA). 37–44 (GENGAGKS) provides a ligand contact to ATP.

The protein belongs to the ABC transporter superfamily. Ribose importer (TC 3.A.1.2.1) family. In terms of assembly, the complex is composed of an ATP-binding protein (RbsA), two transmembrane proteins (RbsC) and a solute-binding protein (RbsB).

The protein localises to the cell inner membrane. It carries out the reaction D-ribose(out) + ATP + H2O = D-ribose(in) + ADP + phosphate + H(+). Functionally, part of the ABC transporter complex RbsABC involved in ribose import. Responsible for energy coupling to the transport system. The protein is Ribose import ATP-binding protein RbsA 1 of Burkholderia thailandensis (strain ATCC 700388 / DSM 13276 / CCUG 48851 / CIP 106301 / E264).